The primary structure comprises 1446 residues: DNA polymerase III PolC-type (1446 aa).

One can recognise an Exonuclease domain in the interval 425-581 (YVIFDVETTG…ADAESTGYLL (157 aa)).

It belongs to the DNA polymerase type-C family. PolC subfamily.

Its subcellular location is the cytoplasm. The catalysed reaction is DNA(n) + a 2'-deoxyribonucleoside 5'-triphosphate = DNA(n+1) + diphosphate. Its function is as follows. Required for replicative DNA synthesis. This DNA polymerase also exhibits 3' to 5' exonuclease activity. This is DNA polymerase III PolC-type from Latilactobacillus sakei subsp. sakei (strain 23K) (Lactobacillus sakei subsp. sakei).